The primary structure comprises 366 residues: Methylthioribose-1-phosphate isomerase (366 aa).

Substrate is bound by residues 53–55 (RGA), arginine 90, and glutamine 203. Aspartate 244 serves as the catalytic Proton donor. Substrate is bound at residue 254–255 (NK).

Belongs to the eIF-2B alpha/beta/delta subunits family. MtnA subfamily.

It catalyses the reaction 5-(methylsulfanyl)-alpha-D-ribose 1-phosphate = 5-(methylsulfanyl)-D-ribulose 1-phosphate. It participates in amino-acid biosynthesis; L-methionine biosynthesis via salvage pathway; L-methionine from S-methyl-5-thio-alpha-D-ribose 1-phosphate: step 1/6. In terms of biological role, catalyzes the interconversion of methylthioribose-1-phosphate (MTR-1-P) into methylthioribulose-1-phosphate (MTRu-1-P). The sequence is that of Methylthioribose-1-phosphate isomerase from Methylocella silvestris (strain DSM 15510 / CIP 108128 / LMG 27833 / NCIMB 13906 / BL2).